A 320-amino-acid chain; its full sequence is Lipoyl synthase (320 aa).

The disordered stretch occupies residues 9–31 (ANDARPRHPEKAHRPDQPIQRKP). Positions 12–31 (ARPRHPEKAHRPDQPIQRKP) are enriched in basic and acidic residues. 7 residues coordinate [4Fe-4S] cluster: cysteine 60, cysteine 65, cysteine 71, cysteine 86, cysteine 90, cysteine 93, and serine 299. One can recognise a Radical SAM core domain in the interval 72-288 (WEKKHATFMI…ETTAYAKGFL (217 aa)).

This sequence belongs to the radical SAM superfamily. Lipoyl synthase family. [4Fe-4S] cluster is required as a cofactor.

The protein resides in the cytoplasm. The enzyme catalyses [[Fe-S] cluster scaffold protein carrying a second [4Fe-4S](2+) cluster] + N(6)-octanoyl-L-lysyl-[protein] + 2 oxidized [2Fe-2S]-[ferredoxin] + 2 S-adenosyl-L-methionine + 4 H(+) = [[Fe-S] cluster scaffold protein] + N(6)-[(R)-dihydrolipoyl]-L-lysyl-[protein] + 4 Fe(3+) + 2 hydrogen sulfide + 2 5'-deoxyadenosine + 2 L-methionine + 2 reduced [2Fe-2S]-[ferredoxin]. Its pathway is protein modification; protein lipoylation via endogenous pathway; protein N(6)-(lipoyl)lysine from octanoyl-[acyl-carrier-protein]: step 2/2. Functionally, catalyzes the radical-mediated insertion of two sulfur atoms into the C-6 and C-8 positions of the octanoyl moiety bound to the lipoyl domains of lipoate-dependent enzymes, thereby converting the octanoylated domains into lipoylated derivatives. The chain is Lipoyl synthase from Methylobacterium nodulans (strain LMG 21967 / CNCM I-2342 / ORS 2060).